Consider the following 467-residue polypeptide: Chlorophenol O-methyltransferase (467 aa).

The disordered stretch occupies residues Met-1 to Ser-41. Polar residues-rich tracts occupy residues Ser-8–Thr-21 and Leu-31–Ser-41. Asp-320 lines the S-adenosyl-L-methionine pocket. His-368 functions as the Proton acceptor in the catalytic mechanism.

The protein belongs to the class I-like SAM-binding methyltransferase superfamily. Cation-independent O-methyltransferase family.

It carries out the reaction 2,4,6-trichlorophenol + S-adenosyl-L-methionine = 2,4,6-trichloroanisole + S-adenosyl-L-homocysteine. S-adenosyl-L-homocysteine acts as a competitive inhibitor. Also strongly inhibited by low concentrations of several metal ions, such as Cu(2+), Hg(2+), Zn(2+), and Ag(+), and to a lesser extent by p-chloromercuribenzoic acid, but it is not significantly affected by several thiols or other thiol reagents. In terms of biological role, chlorophenol O-methyltransferase that methylates chlorophenols into chloroanisoles which are thought to be responsible for cork taint of wines. The only single chlorophenol (CP) methylated is 2-CP; neither 3-CP nor 4-CP are effective substrates. Within the dichlorophenols (DCPs), 2,4-DCP supports the highest rate of O-methylation, and the activity decreases in the following order: 2,3-DCP, 2,5-DCP, 2,6-DCP, and 3,4-DCP. Within the trichlorophenol (TCP) group, the maximal activity is observed with 2,3,4-TCP, whereas there is increasingly reduced activity with 2,4,5-TCP, 2,4,6-TCP, and 2,3,6-TCP. The only tetrachlorophenol (TeCP) that is methylated is 2,3,4,5-TeCP, since no activity can be detected with 2,3,4,6-TeCP and 2,3,5,6-TeCP. Is also able to methylate other halogenated phenols containing fluoro or bromo substituents, whereas other hydroxylated compounds, such as hydroxylated benzoic acids, hydroxybenzaldehydes, phenol, 2-metoxyphenol, and dihydroxybenzene, were not methylated. The protein is Chlorophenol O-methyltransferase of Trichoderma longibrachiatum.